A 239-amino-acid chain; its full sequence is Fatty acid metabolism regulator protein (239 aa).

An HTH gntR-type domain is found at 6–74 (QSPAGFAEEY…HGKPTKVNNF (69 aa)). The H-T-H motif DNA-binding region spans 34-53 (ERELSELIGVTRTTLREVLQ).

Homodimer.

The protein resides in the cytoplasm. Its function is as follows. Multifunctional regulator of fatty acid metabolism. This is Fatty acid metabolism regulator protein from Cronobacter sakazakii (strain ATCC BAA-894) (Enterobacter sakazakii).